The chain runs to 333 residues: MNSILPCQDQYFVGGQSYNCPYSTTTSESGVDVSKETWVSFWAAGLLDNTELQQAPQVLESPSELSFPVLDSCSWEEAQLSSQLYRNKQLQDTLLQKEEELARLHEENNHLRQYLNSTLVKRLEEKAKKLLSSDEFSKVFGKLRKEKRKPKEHRHSPAEIPQFKTAKRNLSTEFSNCEEQPGPHVDPWVLQTLGLKDLNTIDDTLPANYSATTSHPRAVPSISSLFVHDANGYANVPRDLHLDYVGQGTHGSHTTSIHQEDCHSFPRLSNPPVRVQTLPYHTADVSPNKTEMAFSTSLSPHCNVKTHSFHQGQAFVRRDEEGGWKFTWVPKQT.

Residues 83–118 (QLYRNKQLQDTLLQKEEELARLHEENNHLRQYLNST) adopt a coiled-coil conformation. Positions 145–154 (KEKRKPKEHR) are enriched in basic residues. The disordered stretch occupies residues 145 to 165 (KEKRKPKEHRHSPAEIPQFKT).

It belongs to the GEMC1 family. Post-translationally, highly phosphorylated by CDK2; stimulates initiation of DNA replication.

It is found in the nucleus. Its function is as follows. Regulator of DNA replication. Promotes initiation of chromosomal DNA replication by mediating TOPBP1- and CDK2-dependent recruitment of CDC45L onto replication origins. This Mus musculus (Mouse) protein is Geminin coiled-coil domain-containing protein 1 (Gmnc).